A 571-amino-acid chain; its full sequence is Glutamate--tRNA ligase (571 aa).

The 'HIGH' region signature appears at 114-124; it reads PNPNGPWHVGH. Positions 431 to 453 are disordered; that stretch reads KPLAGGPESASPPLHPNDEDRGR.

It belongs to the class-I aminoacyl-tRNA synthetase family. Glutamate--tRNA ligase type 2 subfamily.

It localises to the cytoplasm. The catalysed reaction is tRNA(Glu) + L-glutamate + ATP = L-glutamyl-tRNA(Glu) + AMP + diphosphate. Functionally, catalyzes the attachment of glutamate to tRNA(Glu) in a two-step reaction: glutamate is first activated by ATP to form Glu-AMP and then transferred to the acceptor end of tRNA(Glu). This is Glutamate--tRNA ligase from Natronomonas pharaonis (strain ATCC 35678 / DSM 2160 / CIP 103997 / JCM 8858 / NBRC 14720 / NCIMB 2260 / Gabara) (Halobacterium pharaonis).